A 124-amino-acid chain; its full sequence is Acidic phospholipase A2 (124 aa).

Cystine bridges form between Cys26/Cys117, Cys28/Cys44, Cys43/Cys97, Cys49/Cys124, Cys50/Cys90, Cys57/Cys83, and Cys77/Cys88. Tyr27, Gly29, and Gly31 together coordinate Ca(2+). Residue His47 is part of the active site. Ca(2+) is bound at residue Asp48. The active site involves Glu89.

The protein belongs to the phospholipase A2 family. Group II subfamily. D49 sub-subfamily. Ca(2+) serves as cofactor. Expressed by the venom gland.

Its subcellular location is the secreted. It catalyses the reaction a 1,2-diacyl-sn-glycero-3-phosphocholine + H2O = a 1-acyl-sn-glycero-3-phosphocholine + a fatty acid + H(+). Functionally, snake venom phospholipase A2 (PLA2) that inhibits collagen- and ADP-induced platelet aggregation. PLA2 catalyzes the calcium-dependent hydrolysis of the 2-acyl groups in 3-sn-phosphoglycerides. The sequence is that of Acidic phospholipase A2 from Bothrops jararaca (Jararaca).